Consider the following 491-residue polypeptide: Allene oxide synthase 3 (491 aa).

Positions 104, 135, and 139 each coordinate heme b. Residues N296 and K302 each contribute to the (13S)-hydroperoxy-(9Z,11E)-octadecadienoate site. Residue N296 participates in (13S)-hydroperoxy-(9Z,11E,15Z)-octadecatrienoate binding. Heme b-binding residues include K442 and C444.

Belongs to the cytochrome P450 family. It depends on heme b as a cofactor. Expressed in roots. Not detected in aerial tissues, including cotyledons, leaves, stems and flower buds.

It catalyses the reaction (13S)-hydroperoxy-(9Z,11E,15Z)-octadecatrienoate = (9Z,13S,15Z)-12,13-epoxyoctadeca-9,11,15-trienoate + H2O. The enzyme catalyses (13S)-hydroperoxy-(9Z,11E)-octadecadienoate = (9Z,13S)-12,13-epoxyoctadeca-9,11-dienoate + H2O. It carries out the reaction (9Z,13S,15Z)-12,13-epoxyoctadeca-9,11,15-trienoate = (9S,13S,15Z)-12-oxophyto-10,15-dienoate. Its function is as follows. Cytochrome P450 metabolizing both 13- and 9-hydroperoxides of linoleic and linolenic acids, but with a marked preference for 9-hydroperoxy fatty acids. Catalyzes not only the synthesis of allene oxide, but also its hydrolysis and cyclization. The first step is the synthesis of (12Z)-9,10-epoxyoctadeca-10,12-dienoic acid (9,10-EOD) and the final products are (9R)-alpha-ketol and the racemic cis-10-oxo-11-phytoenoic acid. The cyclase activity possesses regiospecificity and (9Z)-12,13-epoxyoctadeca-9,11-dienoic acid (12,13-EOD) is significantly less efficient as a substrate for cyclopentenone production than 9,10-EOD. Has no hydroperoxide lyase activity. May play a defensive role against soil-borne pests that affect roots or juvenile tissues as they emerge from the germinating seed. The chain is Allene oxide synthase 3 from Solanum lycopersicum (Tomato).